Reading from the N-terminus, the 212-residue chain is Small ribosomal subunit protein uS5 (212 aa).

The S5 DRBM domain maps to 48–111 (LDDEVLDINM…EVAKLNIIDV (64 aa)).

Belongs to the universal ribosomal protein uS5 family. In terms of assembly, part of the 30S ribosomal subunit. Contacts protein S4.

With S4 and S12 plays an important role in translational accuracy. This Halobacterium salinarum (strain ATCC 700922 / JCM 11081 / NRC-1) (Halobacterium halobium) protein is Small ribosomal subunit protein uS5.